We begin with the raw amino-acid sequence, 1977 residues long: Protein rotatin homolog (1977 aa).

The tract at residues serine 141–tyrosine 166 is disordered.

It belongs to the rotatin family. Interacts with Rcd4;this complex is recruited to daughter centrioles before their conversion to centrosomes.

Its subcellular location is the cytoplasm. The protein localises to the cytoskeleton. It is found in the microtubule organizing center. The protein resides in the centrosome. It localises to the centriole. Participes in the structural integrity of both centrioles and basal bodies and in centriole cohesion. Participates in the later stages of centriole assembly through the interaction with Rcd4 leading to the centriole to centrosome conversion. The polypeptide is Protein rotatin homolog (Drosophila melanogaster (Fruit fly)).